The sequence spans 381 residues: MGIKGLNSIITEHVPSAIRKSDIKAFFGRKVAIDASMSLYQFLIAVRQQDGGQLSTETGETTSHLMGMFYRTLRMIDNGIKPCYVFDGKPPVLKSHELDKRTSRREETEKKLAEATEEAEKMKHERRLVKVSKEHNDEAKKLLELMGIPYVNAPGEAEAQCAELAKKGKVYAAASEDMDTLCYRTPYLLRHLTFSEARKEPIHEINTEIVLQGLELTIDQFIDLGIMLGCDYCDSIKGVGPVTALKLMKEHGSLEKIVEYIESGEANNKWKVPENWPYKEARELFVKPDVIDANEIDLKWTPPKEDELIQYLCHEKKFSEERVRSGIKRLQKGLKSGVQGRLDGFFKVVPKTKEQLEAAAAKAKLAKKNAKGAKGKVTKRR.

The interval 1–105 is N-domain; that stretch reads MGIKGLNSII…HELDKRTSRR (105 aa). Position 34 (Asp-34) interacts with Mg(2+). Residues Arg-47 and Arg-71 each contribute to the DNA site. Residues Asp-87, Glu-156, Glu-158, Asp-177, and Asp-179 each contribute to the Mg(2+) site. The segment at 120–251 is I-domain; that stretch reads EKMKHERRLV…VTALKLMKEH (132 aa). Glu-156 provides a ligand contact to DNA. DNA contacts are provided by Gly-229 and Asp-231. Residue Asp-231 participates in Mg(2+) binding. The interaction with PCNA stretch occupies residues 338 to 346; it reads VQGRLDGFF.

Belongs to the XPG/RAD2 endonuclease family. FEN1 subfamily. As to quaternary structure, interacts with PCNA. Three molecules of FEN1 bind to one PCNA trimer with each molecule binding to one PCNA monomer. PCNA stimulates the nuclease activity without altering cleavage specificity. Mg(2+) serves as cofactor. In terms of processing, phosphorylated. Phosphorylation upon DNA damage induces relocalization to the nuclear plasma.

The protein localises to the nucleus. It is found in the nucleolus. Its subcellular location is the nucleoplasm. The protein resides in the mitochondrion. In terms of biological role, structure-specific nuclease with 5'-flap endonuclease and 5'-3' exonuclease activities involved in DNA replication and repair. During DNA replication, cleaves the 5'-overhanging flap structure that is generated by displacement synthesis when DNA polymerase encounters the 5'-end of a downstream Okazaki fragment. It enters the flap from the 5'-end and then tracks to cleave the flap base, leaving a nick for ligation. Also involved in the long patch base excision repair (LP-BER) pathway, by cleaving within the apurinic/apyrimidinic (AP) site-terminated flap. Acts as a genome stabilization factor that prevents flaps from equilibrating into structures that lead to duplications and deletions. Also possesses 5'-3' exonuclease activity on nicked or gapped double-stranded DNA, and exhibits RNase H activity. Also involved in replication and repair of rDNA and in repairing mitochondrial DNA. This is Flap endonuclease 1 from Candida glabrata (strain ATCC 2001 / BCRC 20586 / JCM 3761 / NBRC 0622 / NRRL Y-65 / CBS 138) (Yeast).